A 457-amino-acid chain; its full sequence is Ribosomal protein uS12 methylthiotransferase RimO (457 aa).

Positions 30–140 (PTIGMVSLGC…VLDAVHGAVP (111 aa)) constitute an MTTase N-terminal domain. C39, C75, C104, C171, C175, and C178 together coordinate [4Fe-4S] cluster. Residues 157 to 386 (LTPRHFSYLK…MQKAQAISEA (230 aa)) enclose the Radical SAM core domain. The 68-residue stretch at 389–456 (AARIGQRLEV…EYDLWGRAVL (68 aa)) folds into the TRAM domain.

Belongs to the methylthiotransferase family. RimO subfamily. [4Fe-4S] cluster serves as cofactor.

The protein localises to the cytoplasm. The catalysed reaction is L-aspartate(89)-[ribosomal protein uS12]-hydrogen + (sulfur carrier)-SH + AH2 + 2 S-adenosyl-L-methionine = 3-methylsulfanyl-L-aspartate(89)-[ribosomal protein uS12]-hydrogen + (sulfur carrier)-H + 5'-deoxyadenosine + L-methionine + A + S-adenosyl-L-homocysteine + 2 H(+). Catalyzes the methylthiolation of an aspartic acid residue of ribosomal protein uS12. This chain is Ribosomal protein uS12 methylthiotransferase RimO, found in Cereibacter sphaeroides (strain ATCC 17025 / ATH 2.4.3) (Rhodobacter sphaeroides).